The chain runs to 242 residues: 2-C-methyl-D-erythritol 4-phosphate cytidylyltransferase (242 aa).

The protein belongs to the IspD/TarI cytidylyltransferase family. IspD subfamily.

It catalyses the reaction 2-C-methyl-D-erythritol 4-phosphate + CTP + H(+) = 4-CDP-2-C-methyl-D-erythritol + diphosphate. It functions in the pathway isoprenoid biosynthesis; isopentenyl diphosphate biosynthesis via DXP pathway; isopentenyl diphosphate from 1-deoxy-D-xylulose 5-phosphate: step 2/6. In terms of biological role, catalyzes the formation of 4-diphosphocytidyl-2-C-methyl-D-erythritol from CTP and 2-C-methyl-D-erythritol 4-phosphate (MEP). This chain is 2-C-methyl-D-erythritol 4-phosphate cytidylyltransferase, found in Shewanella loihica (strain ATCC BAA-1088 / PV-4).